The chain runs to 495 residues: Ribosomal protein uS12 methylthiotransferase RimO (495 aa).

One can recognise an MTTase N-terminal domain in the interval 5–121 (RTVALVTLGC…ISDRLQTILN (117 aa)). [4Fe-4S] cluster contacts are provided by C14, C50, and C84. The interval 145 to 183 (QSAGADVALPGHGAPEGLPEDLPEGLAPESGPRAPLRRR) is disordered. The Radical SAM core domain maps to 184–415 (LDGSPVASVK…RLAEELVAQR (232 aa)). C198, C202, and C205 together coordinate [4Fe-4S] cluster. The TRAM domain occupies 417–484 (EERVGETVHV…GVDLVAEPLP (68 aa)).

The protein belongs to the methylthiotransferase family. RimO subfamily. Requires [4Fe-4S] cluster as cofactor.

The protein localises to the cytoplasm. The enzyme catalyses L-aspartate(89)-[ribosomal protein uS12]-hydrogen + (sulfur carrier)-SH + AH2 + 2 S-adenosyl-L-methionine = 3-methylsulfanyl-L-aspartate(89)-[ribosomal protein uS12]-hydrogen + (sulfur carrier)-H + 5'-deoxyadenosine + L-methionine + A + S-adenosyl-L-homocysteine + 2 H(+). Catalyzes the methylthiolation of an aspartic acid residue of ribosomal protein uS12. This chain is Ribosomal protein uS12 methylthiotransferase RimO, found in Streptomyces avermitilis (strain ATCC 31267 / DSM 46492 / JCM 5070 / NBRC 14893 / NCIMB 12804 / NRRL 8165 / MA-4680).